The chain runs to 800 residues: Leukocyte receptor cluster member 8 homolog (800 aa).

Disordered regions lie at residues 118–149 (NYQSMSSQSGQHQGNLAQPPVPGLEDSSMSYS), 175–229 (PCIQ…GFKF), 245–273 (SSEHHDNSAGQQQQQATHMHHPLQQPQQQ), 335–394 (TIDW…GRGS), and 407–519 (KESS…HGHG). 2 stretches are compositionally biased toward low complexity: residues 120–131 (QSMSSQSGQHQG) and 184–201 (NQSNPHSSSNQPNYSQQS). Residues 252-261 (SAGQQQQQAT) are compositionally biased toward polar residues. Residues 338-352 (WSREPLPGKDGGKES) show a composition bias toward basic and acidic residues. Residues 360-387 (QTTLQTSHGSTITITQSPRGGGNSTNAA) are compositionally biased toward polar residues. Low complexity predominate over residues 409–418 (SSSSSSAGSR). 2 stretches are compositionally biased toward basic residues: residues 419–433 (SRSRSPSHSPHRRYR) and 508–519 (EKRAARFQHGHG). The PCI domain occupies 636–800 (DHEEFNQCQA…KLSLAVLPNI (165 aa)).

This is Leukocyte receptor cluster member 8 homolog (leng8) from Xenopus laevis (African clawed frog).